Here is a 233-residue protein sequence, read N- to C-terminus: Large ribosomal subunit protein uL1 (233 aa).

It belongs to the universal ribosomal protein uL1 family. As to quaternary structure, part of the 50S ribosomal subunit.

Its function is as follows. Binds directly to 23S rRNA. The L1 stalk is quite mobile in the ribosome, and is involved in E site tRNA release. In terms of biological role, protein L1 is also a translational repressor protein, it controls the translation of the L11 operon by binding to its mRNA. The protein is Large ribosomal subunit protein uL1 of Rhodospirillum rubrum (strain ATCC 11170 / ATH 1.1.1 / DSM 467 / LMG 4362 / NCIMB 8255 / S1).